A 98-amino-acid polypeptide reads, in one-letter code: MTLIHMNILMAFSMSLMGLLMYRSHLMSALLCLEGMMLSLFVLAALTILSSHFTLANMMPIILLVFAACEAAIGLALLVMVSNTYGTDYVQNLNLLQC.

Helical transmembrane passes span 1–21 (MTLI…GLLM), 29–49 (ALLC…LTIL), and 61–81 (IILL…LVMV).

It belongs to the complex I subunit 4L family. Core subunit of respiratory chain NADH dehydrogenase (Complex I) which is composed of 45 different subunits.

It localises to the mitochondrion inner membrane. The catalysed reaction is a ubiquinone + NADH + 5 H(+)(in) = a ubiquinol + NAD(+) + 4 H(+)(out). Its function is as follows. Core subunit of the mitochondrial membrane respiratory chain NADH dehydrogenase (Complex I) which catalyzes electron transfer from NADH through the respiratory chain, using ubiquinone as an electron acceptor. Part of the enzyme membrane arm which is embedded in the lipid bilayer and involved in proton translocation. The protein is NADH-ubiquinone oxidoreductase chain 4L (MT-ND4L) of Balaenoptera physalus (Fin whale).